The following is a 285-amino-acid chain: Nucleotide-binding protein Psyr_4150 (285 aa).

8 to 15 (GRSGSGKS) provides a ligand contact to ATP. GTP is bound at residue 60-63 (DARN).

Belongs to the RapZ-like family.

Its function is as follows. Displays ATPase and GTPase activities. The sequence is that of Nucleotide-binding protein Psyr_4150 from Pseudomonas syringae pv. syringae (strain B728a).